The sequence spans 739 residues: Polyribonucleotide nucleotidyltransferase (739 aa).

Mg(2+) contacts are provided by D488 and D494. A KH domain is found at P555–I614. One can recognise an S1 motif domain in the interval G624–K692. The disordered stretch occupies residues G698–N739. The segment covering P701–N739 has biased composition (basic and acidic residues).

It belongs to the polyribonucleotide nucleotidyltransferase family. The cofactor is Mg(2+).

It localises to the cytoplasm. The enzyme catalyses RNA(n+1) + phosphate = RNA(n) + a ribonucleoside 5'-diphosphate. In terms of biological role, involved in mRNA degradation. Catalyzes the phosphorolysis of single-stranded polyribonucleotides processively in the 3'- to 5'-direction. This is Polyribonucleotide nucleotidyltransferase from Exiguobacterium sibiricum (strain DSM 17290 / CCUG 55495 / CIP 109462 / JCM 13490 / 255-15).